We begin with the raw amino-acid sequence, 105 residues long: Putative membrane protein insertion efficiency factor (105 aa).

Residues 68–105 form a disordered region; the sequence is FHPGGLDPVPPRRNESGTEISDARPGSDGEASPGAPGL. A compositionally biased stretch (basic and acidic residues) spans 77–94; the sequence is PPRRNESGTEISDARPGS.

Belongs to the UPF0161 family.

The protein localises to the cell membrane. Could be involved in insertion of integral membrane proteins into the membrane. The polypeptide is Putative membrane protein insertion efficiency factor (Thermobifida fusca (strain YX)).